Consider the following 190-residue polypeptide: Protein GrpE (190 aa).

The span at 1–11 (MSNQDEPQNSP) shows a compositional bias: polar residues. Residues 1 to 36 (MSNQDEPQNSPEEFAEDQQADVALEEASSDSSETAA) are disordered. The span at 13 to 28 (EFAEDQQADVALEEAS) shows a compositional bias: acidic residues.

The protein belongs to the GrpE family. Homodimer.

The protein resides in the cytoplasm. Its function is as follows. Participates actively in the response to hyperosmotic and heat shock by preventing the aggregation of stress-denatured proteins, in association with DnaK and GrpE. It is the nucleotide exchange factor for DnaK and may function as a thermosensor. Unfolded proteins bind initially to DnaJ; upon interaction with the DnaJ-bound protein, DnaK hydrolyzes its bound ATP, resulting in the formation of a stable complex. GrpE releases ADP from DnaK; ATP binding to DnaK triggers the release of the substrate protein, thus completing the reaction cycle. Several rounds of ATP-dependent interactions between DnaJ, DnaK and GrpE are required for fully efficient folding. This is Protein GrpE from Teredinibacter turnerae (strain ATCC 39867 / T7901).